The chain runs to 234 residues: MTARIGVVTFPGSLDDRDTQRAIKLAGAEPVALWHKDKDLKQVDAVVLPGGFSYGDYLRAGAISRFSPVMETVIEQAKSGMPVLGICNGFQILTEAHLLPGAMLGNNHLHFICRDQKLRVENADTAWTSDYEAGQEIHIPLKNMDGRYVADERTLDMLEAEGRVAFRYVVGGAAADGYGNPNGSLRDIAGITNEAGNVVGLMPHPEHAVEPLIGTGRTDGLPFFTSILKKLVNA.

One can recognise a Glutamine amidotransferase type-1 domain in the interval 4–234 (RIGVVTFPGS…TSILKKLVNA (231 aa)). C87 serves as the catalytic Nucleophile. Active-site residues include H204 and E206.

Part of the FGAM synthase complex composed of 1 PurL, 1 PurQ and 2 PurS subunits.

It localises to the cytoplasm. The enzyme catalyses N(2)-formyl-N(1)-(5-phospho-beta-D-ribosyl)glycinamide + L-glutamine + ATP + H2O = 2-formamido-N(1)-(5-O-phospho-beta-D-ribosyl)acetamidine + L-glutamate + ADP + phosphate + H(+). It catalyses the reaction L-glutamine + H2O = L-glutamate + NH4(+). Its pathway is purine metabolism; IMP biosynthesis via de novo pathway; 5-amino-1-(5-phospho-D-ribosyl)imidazole from N(2)-formyl-N(1)-(5-phospho-D-ribosyl)glycinamide: step 1/2. Functionally, part of the phosphoribosylformylglycinamidine synthase complex involved in the purines biosynthetic pathway. Catalyzes the ATP-dependent conversion of formylglycinamide ribonucleotide (FGAR) and glutamine to yield formylglycinamidine ribonucleotide (FGAM) and glutamate. The FGAM synthase complex is composed of three subunits. PurQ produces an ammonia molecule by converting glutamine to glutamate. PurL transfers the ammonia molecule to FGAR to form FGAM in an ATP-dependent manner. PurS interacts with PurQ and PurL and is thought to assist in the transfer of the ammonia molecule from PurQ to PurL. This Streptomyces avermitilis (strain ATCC 31267 / DSM 46492 / JCM 5070 / NBRC 14893 / NCIMB 12804 / NRRL 8165 / MA-4680) protein is Phosphoribosylformylglycinamidine synthase subunit PurQ.